Consider the following 152-residue polypeptide: Large ribosomal subunit protein bL9 (152 aa).

Belongs to the bacterial ribosomal protein bL9 family.

Binds to the 23S rRNA. This Coxiella burnetii (strain Dugway 5J108-111) protein is Large ribosomal subunit protein bL9.